The following is a 93-amino-acid chain: Large ribosomal subunit protein uL23cz/uL23cy (93 aa).

Belongs to the universal ribosomal protein uL23 family. As to quaternary structure, part of the 50S ribosomal subunit.

Its subcellular location is the plastid. The protein localises to the chloroplast. In terms of biological role, binds to 23S rRNA. The polypeptide is Large ribosomal subunit protein uL23cz/uL23cy (rpl23-A) (Acorus calamus (Sweet flag)).